A 444-amino-acid polypeptide reads, in one-letter code: 3-phosphoshikimate 1-carboxyvinyltransferase (444 aa).

Lys32, Ser33, and Arg37 together coordinate 3-phosphoshikimate. Lys32 serves as a coordination point for phosphoenolpyruvate. Residues Gly105 and Arg133 each contribute to the phosphoenolpyruvate site. Ser178, Gln180, Asp326, and Lys353 together coordinate 3-phosphoshikimate. Gln180 serves as a coordination point for phosphoenolpyruvate. Asp326 (proton acceptor) is an active-site residue. Phosphoenolpyruvate is bound by residues Arg357 and Arg398.

The protein belongs to the EPSP synthase family. As to quaternary structure, monomer.

The protein resides in the cytoplasm. The catalysed reaction is 3-phosphoshikimate + phosphoenolpyruvate = 5-O-(1-carboxyvinyl)-3-phosphoshikimate + phosphate. It participates in metabolic intermediate biosynthesis; chorismate biosynthesis; chorismate from D-erythrose 4-phosphate and phosphoenolpyruvate: step 6/7. Catalyzes the transfer of the enolpyruvyl moiety of phosphoenolpyruvate (PEP) to the 5-hydroxyl of shikimate-3-phosphate (S3P) to produce enolpyruvyl shikimate-3-phosphate and inorganic phosphate. This is 3-phosphoshikimate 1-carboxyvinyltransferase from Nitrosococcus oceani (strain ATCC 19707 / BCRC 17464 / JCM 30415 / NCIMB 11848 / C-107).